Reading from the N-terminus, the 860-residue chain is Mycobactin import ATP-binding/permease protein IrtA (860 aa).

The Cytoplasmic portion of the chain corresponds to 1 to 293; sequence MARGIQGVMM…GRLLAPLKTT (293 aa). The FAD-binding FR-type domain maps to 15–124; that stretch reads ARDHQATVVS…LGSAGFSVPE (110 aa). FAD contacts are provided by residues 70-73, 87-91, 97-98, and 238-240; these read RAYT, DVVLH, AS, and TEG. The segment at 242–275 is disordered; sequence AMGTKRGDDDKTPEVNPAPRADKPEAPAPAAAGR. Residues 294-314 traverse the membrane as a helical segment; the sequence is LIISGVLQAIITLVQLAPFVL. One can recognise an ABC transmembrane type-1 domain in the interval 295–577; sequence IISGVLQAII…IAYGLGGIRG (283 aa). Topologically, residues 315 to 335 are periplasmic; it reads LVELARLLLSGASSDRLWTLG. The chain crosses the membrane as a helical span at residues 336-356; sequence VVAISLLGTGSFLAAALTLWL. Over 357–409 the chain is Cytoplasmic; that stretch reads HLVDARFARDLRTGLLTKMSRLPLGWFTARGSGSIKQLVQDDTLSLHYLITHA. The chain crosses the membrane as a helical span at residues 410–430; the sequence is IPDAVAAVIAPVAVLVYLFVV. The Periplasmic segment spans residues 431–433; that stretch reads DWR. The chain crosses the membrane as a helical span at residues 434–454; that stretch reads LALVMFVPVLIYLVLMTVMTI. Residues 455–525 lie on the Cytoplasmic side of the membrane; sequence QSGPKIAQSQ…KKSMMDLVTR (71 aa). The helical transmembrane segment at 526–546 threads the bilayer; sequence PGTFLWLIVAVGTPMITSGAM. Residues 547 to 550 are Periplasmic-facing; that stretch reads DPVD. The helical transmembrane segment at 551–571 threads the bilayer; sequence ILPFLLLGTTFGVRLLGIAYG. The Cytoplasmic portion of the chain corresponds to 572-860; it reads LGGIRGGMLA…AAGPTGEAVR (289 aa). In terms of domain architecture, ABC transporter spans 609–842; sequence VVFDNVTFGY…AGRYRQLWET (234 aa). 642-649 contacts ATP; the sequence is GPSGSGKS.

This sequence belongs to the ABC transporter superfamily. Siderophore-Fe(3+) uptake transporter (SIUT) (TC 3.A.1.21) family. In terms of assembly, forms a heterodimer with IrtB. FAD is required as a cofactor.

It is found in the cell inner membrane. Part of the ABC transporter complex IrtAB involved in the import of iron-bound mycobactin (Fe-MBT) and carboxymycobactin (Fe-cMBT). Has a preference for Fe-MBT over Fe-cMBT. Mycobactins are then reduced by the siderophore interaction domain to facilitate iron release in the bacterial cell. Transmembrane domains (TMD) form a pore in the membrane and the ATP-binding domain (NBD) is responsible for energy generation. This is Mycobactin import ATP-binding/permease protein IrtA from Mycolicibacterium smegmatis (strain ATCC 700084 / mc(2)155) (Mycobacterium smegmatis).